A 384-amino-acid chain; its full sequence is Chaperone protein DnaJ (384 aa).

The J domain maps to 5-70 (DFYEVLGVSK…DKKAAYDRYG (66 aa)). The segment at 143-221 (GAQKTITVPG…CHGSGRIEKE (79 aa)) adopts a CR-type zinc-finger fold. Zn(2+)-binding residues include C156, C159, C173, C176, C195, C198, C209, and C212. 4 CXXCXGXG motif repeats span residues 156–163 (CGSCNGTG), 173–180 (CPTCSGLG), 195–202 (CPTCGGQG), and 209–216 (CRVCHGSG).

Belongs to the DnaJ family. Homodimer. It depends on Zn(2+) as a cofactor.

The protein localises to the cytoplasm. In terms of biological role, participates actively in the response to hyperosmotic and heat shock by preventing the aggregation of stress-denatured proteins and by disaggregating proteins, also in an autonomous, DnaK-independent fashion. Unfolded proteins bind initially to DnaJ; upon interaction with the DnaJ-bound protein, DnaK hydrolyzes its bound ATP, resulting in the formation of a stable complex. GrpE releases ADP from DnaK; ATP binding to DnaK triggers the release of the substrate protein, thus completing the reaction cycle. Several rounds of ATP-dependent interactions between DnaJ, DnaK and GrpE are required for fully efficient folding. Also involved, together with DnaK and GrpE, in the DNA replication of plasmids through activation of initiation proteins. This chain is Chaperone protein DnaJ, found in Rhodobacter capsulatus (Rhodopseudomonas capsulata).